A 268-amino-acid polypeptide reads, in one-letter code: uncharacterized protein (268 aa).

This is an uncharacterized protein from Metamycoplasma hominis (strain ATCC 23114 / DSM 25592 / NBRC 14850 / NCTC 10111 / PG21) (Mycoplasma hominis).